Reading from the N-terminus, the 67-residue chain is DNA-directed RNA polymerase subunit omega (67 aa).

It belongs to the RNA polymerase subunit omega family. The RNAP catalytic core consists of 2 alpha, 1 beta, 1 beta' and 1 omega subunit. When a sigma factor is associated with the core the holoenzyme is formed, which can initiate transcription.

It carries out the reaction RNA(n) + a ribonucleoside 5'-triphosphate = RNA(n+1) + diphosphate. Promotes RNA polymerase assembly. Latches the N- and C-terminal regions of the beta' subunit thereby facilitating its interaction with the beta and alpha subunits. This Polaromonas naphthalenivorans (strain CJ2) protein is DNA-directed RNA polymerase subunit omega.